Here is a 1072-residue protein sequence, read N- to C-terminus: Guanylyl cyclase C (1072 aa).

The N-terminal stretch at 1 to 19 is a signal peptide; it reads MTSLLGLAVRLLLFQPALM. The Extracellular segment spans residues 20-433; that stretch reads VFWASQVRQN…VPGLGPQILM (414 aa). N-linked (GlcNAc...) asparagine glycans are attached at residues Asn32, Asn75, Asn79, Asn179, Asn188, Asn195, Asn284, Asn307, Asn345, and Asn402. The helical transmembrane segment at 434-454 threads the bilayer; it reads IAVFTLTGILVVLLLIALLVL. Topologically, residues 455–1072 are cytoplasmic; that stretch reads RKYRRDHALR…NNSDHDSTYF (618 aa). The 260-residue stretch at 489 to 748 folds into the Protein kinase domain; that stretch reads LKIDDDRRRD…KIESTLAKIF (260 aa). In terms of domain architecture, Guanylate cyclase spans 823 to 953; sequence TIYFSDIVGF…DTVNTASRME (131 aa).

Belongs to the adenylyl cyclase class-4/guanylyl cyclase family. Homotrimer. Interacts via its C-terminal region with NHERF4. Interacts with the lectin chaperone VIP36. Post-translationally, glycosylation at Asn-75 and/or Asn-79 is required for interaction with VIP36 while glycosylation at Asn-345 and Asn-402 modulates ligand-mediated GC-C activation.

Its subcellular location is the cell membrane. The protein localises to the endoplasmic reticulum membrane. The catalysed reaction is GTP = 3',5'-cyclic GMP + diphosphate. Functionally, guanylyl cyclase that catalyzes synthesis of cyclic GMP (cGMP) from GTP. In Mus musculus (Mouse), this protein is Guanylyl cyclase C (Gucy2c).